Here is a 449-residue protein sequence, read N- to C-terminus: Tubulin alpha chain (449 aa).

GTP-binding residues include glutamine 11, glutamate 71, serine 140, glycine 144, threonine 145, threonine 179, asparagine 206, and asparagine 228. Glutamate 71 serves as a coordination point for Mg(2+). The active site involves glutamate 254.

It belongs to the tubulin family. Dimer of alpha and beta chains. A typical microtubule is a hollow water-filled tube with an outer diameter of 25 nm and an inner diameter of 15 nM. Alpha-beta heterodimers associate head-to-tail to form protofilaments running lengthwise along the microtubule wall with the beta-tubulin subunit facing the microtubule plus end conferring a structural polarity. Microtubules usually have 13 protofilaments but different protofilament numbers can be found in some organisms and specialized cells. It depends on Mg(2+) as a cofactor.

The protein localises to the cytoplasm. The protein resides in the cytoskeleton. The catalysed reaction is GTP + H2O = GDP + phosphate + H(+). Tubulin is the major constituent of microtubules, a cylinder consisting of laterally associated linear protofilaments composed of alpha- and beta-tubulin heterodimers. Microtubules grow by the addition of GTP-tubulin dimers to the microtubule end, where a stabilizing cap forms. Below the cap, tubulin dimers are in GDP-bound state, owing to GTPase activity of alpha-tubulin. In Pneumocystis carinii, this protein is Tubulin alpha chain (TUB1).